A 495-amino-acid chain; its full sequence is Ectonucleoside triphosphate diphosphohydrolase 8 (495 aa).

Residues 1–8 lie on the Cytoplasmic side of the membrane; it reads MGLSRKEQ. Residues 9–29 traverse the membrane as a helical segment; it reads VFLALLGASGVSGLTALILLL. The Extracellular segment spans residues 30–471; the sequence is VEATSVLLPT…AESYGVWVAK (442 aa). N-linked (GlcNAc...) asparagine glycosylation is present at Asn67. Cysteines 78 and 102 form a disulfide. The active-site Proton acceptor is the Glu168. Cys246 and Cys292 are oxidised to a cystine. A glycan (N-linked (GlcNAc...) asparagine) is linked at Asn304. A disulfide bridge connects residues Cys329 and Cys335. N-linked (GlcNAc...) asparagine glycosylation occurs at Asn363. Residues Cys381 and Cys403 are joined by a disulfide bond. A helical transmembrane segment spans residues 472–492; it reads VVFMVLALVAVVGAALVQLFW. Topologically, residues 493–495 are cytoplasmic; it reads LQD.

The protein belongs to the GDA1/CD39 NTPase family. It depends on Ca(2+) as a cofactor. Mg(2+) is required as a cofactor. Post-translationally, N-glycosylated.

The protein localises to the cell membrane. It carries out the reaction a ribonucleoside 5'-triphosphate + 2 H2O = a ribonucleoside 5'-phosphate + 2 phosphate + 2 H(+). With respect to regulation, not inhibited by ARL 67156. Functionally, canalicular ectonucleoside NTPDase responsible for the main hepatic NTPDase activity. Ectonucleoside NTPDases catalyze the hydrolysis of gamma- and beta-phosphate residues of nucleotides, playing a central role in concentration of extracellular nucleotides. Has activity toward ATP, ADP, UTP and UDP, but not toward AMP. This is Ectonucleoside triphosphate diphosphohydrolase 8 (ENTPD8) from Homo sapiens (Human).